Consider the following 265-residue polypeptide: Undecaprenyl-diphosphatase 1 (265 aa).

Helical transmembrane passes span 4 to 24 (IITA…PISS), 42 to 62 (AKTF…ILYH), 84 to 104 (FHVF…HDVI), 108 to 128 (LFQP…MIFA), 184 to 204 (SEFS…LDLL), 217 to 237 (MFAV…VTFL), and 245 to 265 (LKPF…FVLL).

The protein belongs to the UppP family.

It is found in the cell membrane. It carries out the reaction di-trans,octa-cis-undecaprenyl diphosphate + H2O = di-trans,octa-cis-undecaprenyl phosphate + phosphate + H(+). Functionally, catalyzes the dephosphorylation of undecaprenyl diphosphate (UPP). Confers resistance to bacitracin. The sequence is that of Undecaprenyl-diphosphatase 1 from Bacillus anthracis.